Reading from the N-terminus, the 469-residue chain is Glutamate--tRNA ligase 2 (469 aa).

Positions 11–21 (PSPTGHLHLGG) match the 'HIGH' region motif. The short motif at 238-242 (KLSKR) is the 'KMSKS' region element. Residue Lys241 participates in ATP binding.

The protein belongs to the class-I aminoacyl-tRNA synthetase family. Glutamate--tRNA ligase type 1 subfamily. Monomer.

It is found in the cytoplasm. It carries out the reaction tRNA(Glu) + L-glutamate + ATP = L-glutamyl-tRNA(Glu) + AMP + diphosphate. Functionally, catalyzes the attachment of glutamate to tRNA(Glu) in a two-step reaction: glutamate is first activated by ATP to form Glu-AMP and then transferred to the acceptor end of tRNA(Glu). This Ehrlichia chaffeensis (strain ATCC CRL-10679 / Arkansas) protein is Glutamate--tRNA ligase 2.